The primary structure comprises 264 residues: 3-methyl-2-oxobutanoate hydroxymethyltransferase (264 aa).

Residues Asp-46 and Asp-85 each coordinate Mg(2+). 3-methyl-2-oxobutanoate contacts are provided by residues Asp-46 to Ser-47, Asp-85, and Lys-113. A Mg(2+)-binding site is contributed by Glu-115. Glu-181 (proton acceptor) is an active-site residue.

It belongs to the PanB family. In terms of assembly, homodecamer; pentamer of dimers. It depends on Mg(2+) as a cofactor.

The protein resides in the cytoplasm. The enzyme catalyses 3-methyl-2-oxobutanoate + (6R)-5,10-methylene-5,6,7,8-tetrahydrofolate + H2O = 2-dehydropantoate + (6S)-5,6,7,8-tetrahydrofolate. It participates in cofactor biosynthesis; (R)-pantothenate biosynthesis; (R)-pantoate from 3-methyl-2-oxobutanoate: step 1/2. Functionally, catalyzes the reversible reaction in which hydroxymethyl group from 5,10-methylenetetrahydrofolate is transferred onto alpha-ketoisovalerate to form ketopantoate. In Salmonella typhi, this protein is 3-methyl-2-oxobutanoate hydroxymethyltransferase.